The chain runs to 119 residues: MKKKYRIKKNDDFQKVFRRGKSFANRQFVVYTLKQEEASHFRIGLSVSKKIGNAVCRNRIKRYIRQSFHELESQINPENEYIIIARKPAANMDFHEVKKSLIHVLKVGRVLKQKPNNSK.

It belongs to the RnpA family. As to quaternary structure, consists of a catalytic RNA component (M1 or rnpB) and a protein subunit.

It carries out the reaction Endonucleolytic cleavage of RNA, removing 5'-extranucleotides from tRNA precursor.. Its function is as follows. RNaseP catalyzes the removal of the 5'-leader sequence from pre-tRNA to produce the mature 5'-terminus. It can also cleave other RNA substrates such as 4.5S RNA. The protein component plays an auxiliary but essential role in vivo by binding to the 5'-leader sequence and broadening the substrate specificity of the ribozyme. The sequence is that of Ribonuclease P protein component from Listeria innocua serovar 6a (strain ATCC BAA-680 / CLIP 11262).